Consider the following 263-residue polypeptide: Undecaprenyl-diphosphatase 3 (263 aa).

A run of 8 helical transmembrane segments spans residues G15–F37, A42–W62, L83–I103, V106–V126, I142–F162, A183–I203, L216–L236, and V242–I262.

This sequence belongs to the UppP family.

It localises to the cell membrane. The enzyme catalyses di-trans,octa-cis-undecaprenyl diphosphate + H2O = di-trans,octa-cis-undecaprenyl phosphate + phosphate + H(+). Its function is as follows. Catalyzes the dephosphorylation of undecaprenyl diphosphate (UPP). Confers resistance to bacitracin. This is Undecaprenyl-diphosphatase 3 from Bacillus thuringiensis subsp. konkukian (strain 97-27).